Reading from the N-terminus, the 279-residue chain is uncharacterized protein (279 aa).

Positions 1–19 (MKLKLYLIPLLASGIILSA) are cleaved as a signal peptide. Residue Cys20 is the site of N-palmitoyl cysteine attachment. A lipid anchor (S-diacylglycerol cysteine) is attached at Cys20.

This sequence belongs to the MG439/MG440 family.

The protein resides in the cell membrane. This is an uncharacterized protein from Mycoplasma pneumoniae (strain ATCC 29342 / M129 / Subtype 1) (Mycoplasmoides pneumoniae).